Here is a 445-residue protein sequence, read N- to C-terminus: Anaerobilin synthase (445 aa).

The 236-residue stretch at 52–287 (TASPRKRLVY…LQGCDFMDDA (236 aa)) folds into the Radical SAM core domain. Position 61 (tyrosine 61) interacts with S-adenosyl-L-methionine. Positions 67 and 71 each coordinate [4Fe-4S] cluster. Phenylalanine 73 is a binding site for S-adenosyl-L-methionine. Cysteine 74 provides a ligand contact to [4Fe-4S] cluster. S-adenosyl-L-methionine contacts are provided by residues glycine 118, 119–120 (GT), glutamate 151, glutamine 178, arginine 190, and aspartate 215.

Belongs to the anaerobic coproporphyrinogen-III oxidase family. ChuW/HutW subfamily. [4Fe-4S] cluster is required as a cofactor.

The enzyme catalyses 2 reduced [flavodoxin] + heme b + 2 S-adenosyl-L-methionine = anaerobilin + 2 oxidized [flavodoxin] + Fe(2+) + 5'-deoxyadenosine + L-methionine + S-adenosyl-L-homocysteine. With respect to regulation, inhibited by exposure to molecular oxygen. In terms of biological role, involved in heme degradation and iron utilization under anaerobic conditions. Catalyzes a radical-mediated mechanism facilitating iron liberation and the production of the tetrapyrrole product anaerobilin. Can use heme, mesoheme and deuteroheme as substrates. The chain is Anaerobilin synthase from Escherichia coli O157:H7.